Consider the following 414-residue polypeptide: Probable cytochrome P450 127A1 (414 aa).

Cys-364 contacts heme.

This sequence belongs to the cytochrome P450 family. It depends on heme as a cofactor.

Cytochromes P450 are a group of heme-thiolate monooxygenases. They oxidize a variety of structurally unrelated compounds, including steroids, fatty acids, and xenobiotics. This is Probable cytochrome P450 127A1 (cyp127A1) from Sinorhizobium fredii (strain NBRC 101917 / NGR234).